A 445-amino-acid polypeptide reads, in one-letter code: Tol-Pal system protein TolB (445 aa).

A signal peptide spans 1 to 26 (MLNRRNFIRTTSALAASTALPGYAFG).

Belongs to the TolB family. The Tol-Pal system is composed of five core proteins: the inner membrane proteins TolA, TolQ and TolR, the periplasmic protein TolB and the outer membrane protein Pal. They form a network linking the inner and outer membranes and the peptidoglycan layer.

Its subcellular location is the periplasm. Its function is as follows. Part of the Tol-Pal system, which plays a role in outer membrane invagination during cell division and is important for maintaining outer membrane integrity. In Jannaschia sp. (strain CCS1), this protein is Tol-Pal system protein TolB.